Here is an 89-residue protein sequence, read N- to C-terminus: Phasin PhaP (89 aa).

2 helix regions span residues 3-26 (TQFFEEYQTQLLDWQKKFFSTWME) and 39-83 (DTFE…ALRQ).

In terms of assembly, homotetramer.

It is found in the cellular thylakoid membrane. Its subcellular location is the cytoplasm. Its pathway is biopolymer metabolism; poly-(R)-3-hydroxybutanoate biosynthesis. A phasin, it attaches to the polyhydroxybutyrate (PHB) granule surface regulating the number and size of PHB granules within a cell. It probably also acts as a regulator affecting the biosynthetic activity of PHB synthase in vivo. This Synechocystis sp. (strain ATCC 27184 / PCC 6803 / Kazusa) protein is Phasin PhaP.